Reading from the N-terminus, the 333-residue chain is Adenosine deaminase (333 aa).

2 residues coordinate Zn(2+): histidine 12 and histidine 14. Substrate is bound by residues histidine 14, aspartate 16, and glycine 170. Histidine 197 is a binding site for Zn(2+). Glutamate 200 (proton donor) is an active-site residue. Position 278 (aspartate 278) interacts with Zn(2+). Residue aspartate 279 participates in substrate binding.

This sequence belongs to the metallo-dependent hydrolases superfamily. Adenosine and AMP deaminases family. Adenosine deaminase subfamily. Zn(2+) serves as cofactor.

It catalyses the reaction adenosine + H2O + H(+) = inosine + NH4(+). The catalysed reaction is 2'-deoxyadenosine + H2O + H(+) = 2'-deoxyinosine + NH4(+). Its function is as follows. Catalyzes the hydrolytic deamination of adenosine and 2-deoxyadenosine. The polypeptide is Adenosine deaminase (Klebsiella pneumoniae subsp. pneumoniae (strain ATCC 700721 / MGH 78578)).